A 55-amino-acid polypeptide reads, in one-letter code: Potassium channel toxin alpha-KTx 17.1 (55 aa).

The N-terminal stretch at 1 to 23 (MKFIIVLILISVLIATIVPVNEA) is a signal peptide. Pyrrolidone carboxylic acid is present on Q24. Disulfide bonds link C27-C43, C33-C48, and C37-C50. Threonine amide is present on T53.

Belongs to the short scorpion toxin superfamily. Potassium channel inhibitor family. Alpha-KTx 17 subfamily. Expressed by the venom gland.

It localises to the secreted. Functionally, blocker of potassium channels, which inhibits both the delayed rectifier and fast transient potassium current. The inhibition is reversible and voltage-independent. It causes a depolarizing shift of the steady-state activation curve of the currents, without changing their steady-state inactivation behavior. The polypeptide is Potassium channel toxin alpha-KTx 17.1 (Olivierus martensii (Manchurian scorpion)).